Reading from the N-terminus, the 451-residue chain is Phosphoglucosamine mutase (451 aa).

The active-site Phosphoserine intermediate is serine 104. Positions 104, 242, 244, and 246 each coordinate Mg(2+). Phosphoserine is present on serine 104.

Belongs to the phosphohexose mutase family. Mg(2+) serves as cofactor. Post-translationally, activated by phosphorylation.

The catalysed reaction is alpha-D-glucosamine 1-phosphate = D-glucosamine 6-phosphate. Its function is as follows. Catalyzes the conversion of glucosamine-6-phosphate to glucosamine-1-phosphate. In Kocuria rhizophila (strain ATCC 9341 / DSM 348 / NBRC 103217 / DC2201), this protein is Phosphoglucosamine mutase.